A 358-amino-acid polypeptide reads, in one-letter code: UDP-N-acetylglucosamine--N-acetylmuramyl-(pentapeptide) pyrophosphoryl-undecaprenol N-acetylglucosamine transferase (358 aa).

Residues 11 to 13 (TGG), Asn122, Arg161, Ser189, Ile243, 262 to 267 (ALTVCE), and Gln288 contribute to the UDP-N-acetyl-alpha-D-glucosamine site.

The protein belongs to the glycosyltransferase 28 family. MurG subfamily.

It localises to the cell inner membrane. It catalyses the reaction di-trans,octa-cis-undecaprenyl diphospho-N-acetyl-alpha-D-muramoyl-L-alanyl-D-glutamyl-meso-2,6-diaminopimeloyl-D-alanyl-D-alanine + UDP-N-acetyl-alpha-D-glucosamine = di-trans,octa-cis-undecaprenyl diphospho-[N-acetyl-alpha-D-glucosaminyl-(1-&gt;4)]-N-acetyl-alpha-D-muramoyl-L-alanyl-D-glutamyl-meso-2,6-diaminopimeloyl-D-alanyl-D-alanine + UDP + H(+). The protein operates within cell wall biogenesis; peptidoglycan biosynthesis. Functionally, cell wall formation. Catalyzes the transfer of a GlcNAc subunit on undecaprenyl-pyrophosphoryl-MurNAc-pentapeptide (lipid intermediate I) to form undecaprenyl-pyrophosphoryl-MurNAc-(pentapeptide)GlcNAc (lipid intermediate II). This chain is UDP-N-acetylglucosamine--N-acetylmuramyl-(pentapeptide) pyrophosphoryl-undecaprenol N-acetylglucosamine transferase, found in Coxiella burnetii (strain Dugway 5J108-111).